A 127-amino-acid polypeptide reads, in one-letter code: MARIAGVDLPRDKRVEIGLTYLFGIGLSRSQEILAETGVNPDTRVRDLTDEEVANLRAYIETNYQIEGDLRRWEAMNIKRLADIGTYRGRRHRQGLPVRGQRTRTNARTRRGRRVTVAGKKKAPSKK.

The interval 90-127 (RRHRQGLPVRGQRTRTNARTRRGRRVTVAGKKKAPSKK) is disordered. Residues 101-127 (QRTRTNARTRRGRRVTVAGKKKAPSKK) are compositionally biased toward basic residues.

The protein belongs to the universal ribosomal protein uS13 family. In terms of assembly, part of the 30S ribosomal subunit. Forms a loose heterodimer with protein S19. Forms two bridges to the 50S subunit in the 70S ribosome.

In terms of biological role, located at the top of the head of the 30S subunit, it contacts several helices of the 16S rRNA. In the 70S ribosome it contacts the 23S rRNA (bridge B1a) and protein L5 of the 50S subunit (bridge B1b), connecting the 2 subunits; these bridges are implicated in subunit movement. Contacts the tRNAs in the A and P-sites. In Rippkaea orientalis (strain PCC 8801 / RF-1) (Cyanothece sp. (strain PCC 8801)), this protein is Small ribosomal subunit protein uS13.